The following is a 223-amino-acid chain: Mitochondrial cardiolipin hydrolase (223 aa).

Residues 1-6 (MGCASS) lie on the Mitochondrial intermembrane side of the membrane. The helical transmembrane segment at 7-24 (KEEVALTPLSDVNAAKEV) threads the bilayer. At 25 to 223 (ADLKAQVDQL…QFDKLWDMFK (199 aa)) the chain is on the cytoplasmic side. The PLD phosphodiesterase domain occupies 164–191 (TAAHMHHKFAIIDGRLLLNGSFNWTRQA). Catalysis depends on residues histidine 169, lysine 171, and aspartate 176.

The protein belongs to the phospholipase D family. MitoPLD/Zucchini subfamily. Homodimer.

It is found in the mitochondrion outer membrane. Plays a critical role in PIWI-interacting RNA (piRNA) biogenesis. piRNAs provide essential protection against the activity of mobile genetic elements. piRNA-mediated transposon silencing is thus critical for maintaining genome stability. Backbone-non-specific, single strand-specific nuclease, cleaving either RNA or DNA substrates with similar affinity. Produces 5' phosphate and 3' hydroxyl termini, suggesting it could directly participate in the processing of primary piRNA transcripts. Has been proposed to act as a cardiolipin hydrolase to generate phosphatidic acid at mitochondrial surface. Although it cannot be excluded that it can act as a phospholipase in some circumstances, this activity could not be confirmed. In Chlamydomonas reinhardtii (Chlamydomonas smithii), this protein is Mitochondrial cardiolipin hydrolase.